The chain runs to 346 residues: fMet-Leu-Phe receptor (346 aa).

N1 and N7 each carry an N-linked (GlcNAc...) asparagine glycan. Residues 1–24 (NSSLPTNISGGTPAVSAGYLFLDI) are Extracellular-facing. A helical membrane pass occupies residues 25–47 (ITYLVFAVTFVLGVLGNGLVIWV). Topologically, residues 48–58 (AGFRMRHTVTT) are cytoplasmic. A helical transmembrane segment spans residues 59 to 80 (ISYLNLAVADFCFTSTLPFLMV). Over 81–97 (VKVMRGHWPFGWFLCKF) the chain is Extracellular. The cysteines at positions 95 and 173 are disulfide-linked. A helical transmembrane segment spans residues 98–118 (IFTIVDINLFGSVFLIALIAL). Over 119 to 137 (DRCVCVLHPVWTQNHRTVS) the chain is Cytoplasmic. A helical membrane pass occupies residues 138–159 (LAKKVIIGPWVMALLLTLPVII). Over 160–202 (RVTTVPGKTGTVACTFDFSPWTNDPVEKLKVTIAMLTVRGIIR) the chain is Extracellular. A helical membrane pass occupies residues 203-223 (FIIGFSVPMSIVAVSYGLIAT). Residues 224 to 239 (KIHKQGLIKSSRPLRV) are Cytoplasmic-facing. Residues 240–263 (LSFVVAAFFLCWSPYQVVAFIATV) traverse the membrane as a helical segment. Residues 264–282 (RLRNILQGLSKELRIAVDA) lie on the Extracellular side of the membrane. A helical membrane pass occupies residues 283 to 302 (TSALAFFNSCLNPMLYVFMG). The Cytoplasmic segment spans residues 303–346 (QDFRERLIHSLPTSLERALTEDSAQTSDTATNSTLPSAEVPLQA). Residues 321-346 (LTEDSAQTSDTATNSTLPSAEVPLQA) are disordered. Residues 324-338 (DSAQTSDTATNSTLP) are compositionally biased toward polar residues.

This sequence belongs to the G-protein coupled receptor 1 family. Phosphorylated; which is necessary for desensitization.

The protein localises to the cell membrane. In terms of biological role, high affinity receptor for N-formyl-methionyl peptides (fMLP), which are powerful neutrophil chemotactic factors. Binding of fMLP to the receptor stimulates intracellular calcium mobilization and superoxide anion release. This response is mediated via a G-protein that activates a phosphatidylinositol-calcium second messenger system. Receptor for TAFA4, mediates its effects on chemoattracting macrophages, promoting phagocytosis and increasing ROS release. Receptor for cathepsin CTSG, leading to increased phagocyte chemotaxis. This chain is fMet-Leu-Phe receptor (FPR1), found in Macaca mulatta (Rhesus macaque).